The following is a 207-amino-acid chain: MANVKLFDQTGKEAGEVVLNDAIFGIEPNESVVFDVIISQRASLRQGTHAVKNRSAVSGGGRKPWRQKGTGRARQGSIRSPQWRGGGVVFGPTPRSYAYKLPRKVRRLALKSVYSEKVAENKFVAVDSLSFTAPKTAEFAKVLAALSIDTKVLVILEEGNEFAALSARNLPNVKVATATTASVLDIVNSDKLLVTQAAISKIEEVLA.

The tract at residues His-49–Ile-78 is disordered.

Belongs to the universal ribosomal protein uL4 family. As to quaternary structure, part of the 50S ribosomal subunit.

One of the primary rRNA binding proteins, this protein initially binds near the 5'-end of the 23S rRNA. It is important during the early stages of 50S assembly. It makes multiple contacts with different domains of the 23S rRNA in the assembled 50S subunit and ribosome. In terms of biological role, forms part of the polypeptide exit tunnel. The protein is Large ribosomal subunit protein uL4 of Streptococcus gordonii (strain Challis / ATCC 35105 / BCRC 15272 / CH1 / DL1 / V288).